We begin with the raw amino-acid sequence, 404 residues long: Chorismate synthase (404 aa).

Positions 40 and 46 each coordinate NADP(+). Residues 136–138 (RAS), 257–258 (QA), Gly301, 316–320 (KPIST), and Arg342 contribute to the FMN site.

The protein belongs to the chorismate synthase family. As to quaternary structure, homotetramer. It depends on FMNH2 as a cofactor.

It catalyses the reaction 5-O-(1-carboxyvinyl)-3-phosphoshikimate = chorismate + phosphate. It participates in metabolic intermediate biosynthesis; chorismate biosynthesis; chorismate from D-erythrose 4-phosphate and phosphoenolpyruvate: step 7/7. In terms of biological role, catalyzes the anti-1,4-elimination of the C-3 phosphate and the C-6 proR hydrogen from 5-enolpyruvylshikimate-3-phosphate (EPSP) to yield chorismate, which is the branch point compound that serves as the starting substrate for the three terminal pathways of aromatic amino acid biosynthesis. This reaction introduces a second double bond into the aromatic ring system. In Mycolicibacterium vanbaalenii (strain DSM 7251 / JCM 13017 / BCRC 16820 / KCTC 9966 / NRRL B-24157 / PYR-1) (Mycobacterium vanbaalenii), this protein is Chorismate synthase.